Consider the following 281-residue polypeptide: MVVVKNIDEMKKICRELRKEKTIGFVPTMGYLHEGHLSLVRRSKKENDITVVSIFVNPTQFGPNEDYNSYPRNLNRDASLLEKEDVDYVFIPEIEQMYPKDYSTYINEEKLSRHLCGRSRPGHFRGVCTVVTKLFNIVKPNRAYFGQKDAQQFRVIRRMVRDLNMDVEVIECPIVREPDGLAMSSRNIYLSTEERNQALALNRSLKIAENLYRSGEKNTERMKEKIVQYLSSFDKIKIDYVEIVSEETLEPVEKIEGKVVVAIAAWVGKARLIDNTILGEI.

29-36 (MGYLHEGH) provides a ligand contact to ATP. The active-site Proton donor is His36. Gln60 contacts (R)-pantoate. Residue Gln60 coordinates beta-alanine. Position 146-149 (146-149 (GQKD)) interacts with ATP. Gln152 is a (R)-pantoate binding site. ATP contacts are provided by residues Val175 and 183 to 186 (MSSR).

It belongs to the pantothenate synthetase family. As to quaternary structure, homodimer.

It localises to the cytoplasm. The catalysed reaction is (R)-pantoate + beta-alanine + ATP = (R)-pantothenate + AMP + diphosphate + H(+). It functions in the pathway cofactor biosynthesis; (R)-pantothenate biosynthesis; (R)-pantothenate from (R)-pantoate and beta-alanine: step 1/1. Its function is as follows. Catalyzes the condensation of pantoate with beta-alanine in an ATP-dependent reaction via a pantoyl-adenylate intermediate. The protein is Pantothenate synthetase of Pseudothermotoga lettingae (strain ATCC BAA-301 / DSM 14385 / NBRC 107922 / TMO) (Thermotoga lettingae).